Consider the following 430-residue polypeptide: MTSVVVVGTQWGDEGKGKITDFLSADAEVIARYQGGDNAGHTIVIDNKKFKLHLIPSGIFFKEKISVIGNGVVVNPKSLVKELAYLHGEGVTTDNLRISDRAHVILPYHIKLDQLQEDAKGDNKIGTTIKGIGPAYMDKAARVGIRIADLLDREVFAERLKINLAEKNRLFEKMYDSTPLEFDDIFEEYYEYGQQIKQYVTDTSVILNDALDAGKRVLFEGAQGVMLDIDQGTYPFVTSSNPVAGGVTIGSGVGPSKINKVVGVCKAYTSRVGDGPFPTELFDEVGDRIREIGKEYGTTTGRPRRVGWFDSVVMRHSRRVSGITNLSLNSIDVLSGLDTVKICVAYDLDGKRIDYYPASLEQLKRCKPIYEELPGWSEDITACRSLDGLPENARNYVRRVGELVGVRISTFSVGPGREQTNILESVWSNI.

Residues 12–18 (GDEGKGK) and 40–42 (GHT) each bind GTP. Asp-13 serves as the catalytic Proton acceptor. Mg(2+)-binding residues include Asp-13 and Gly-40. Residues 13–16 (DEGK), 38–41 (NAGH), Thr-128, Arg-142, Gln-223, Thr-238, and Arg-302 contribute to the IMP site. Residue His-41 is the Proton donor of the active site. Residue 298–304 (TTTGRPR) participates in substrate binding. GTP-binding positions include Arg-304, 330 to 332 (SID), and 412 to 414 (SVG).

It belongs to the adenylosuccinate synthetase family. As to quaternary structure, homodimer. Mg(2+) is required as a cofactor.

The protein localises to the cytoplasm. It catalyses the reaction IMP + L-aspartate + GTP = N(6)-(1,2-dicarboxyethyl)-AMP + GDP + phosphate + 2 H(+). It participates in purine metabolism; AMP biosynthesis via de novo pathway; AMP from IMP: step 1/2. In terms of biological role, plays an important role in the de novo pathway of purine nucleotide biosynthesis. Catalyzes the first committed step in the biosynthesis of AMP from IMP. The chain is Adenylosuccinate synthetase from Streptococcus agalactiae serotype Ia (strain ATCC 27591 / A909 / CDC SS700).